We begin with the raw amino-acid sequence, 120 residues long: NAD(P)H-quinone oxidoreductase subunit 3, chloroplastic (120 aa).

3 helical membrane passes run 9-29 (IFWA…LISG), 64-84 (MFAL…PWAM), and 88-108 (VLGV…ILGL).

It belongs to the complex I subunit 3 family. In terms of assembly, NDH is composed of at least 16 different subunits, 5 of which are encoded in the nucleus.

It localises to the plastid. The protein localises to the chloroplast thylakoid membrane. The enzyme catalyses a plastoquinone + NADH + (n+1) H(+)(in) = a plastoquinol + NAD(+) + n H(+)(out). It catalyses the reaction a plastoquinone + NADPH + (n+1) H(+)(in) = a plastoquinol + NADP(+) + n H(+)(out). Its function is as follows. NDH shuttles electrons from NAD(P)H:plastoquinone, via FMN and iron-sulfur (Fe-S) centers, to quinones in the photosynthetic chain and possibly in a chloroplast respiratory chain. The immediate electron acceptor for the enzyme in this species is believed to be plastoquinone. Couples the redox reaction to proton translocation, and thus conserves the redox energy in a proton gradient. The chain is NAD(P)H-quinone oxidoreductase subunit 3, chloroplastic from Olimarabidopsis pumila (Dwarf rocket).